A 941-amino-acid chain; its full sequence is Replicative DNA helicase DnaB (941 aa).

The interval 1-25 is disordered; the sequence is MAEFEERPRLSIGEEEAPPYPLEKL. The region spanning 214–484 is the SF4 helicase; first part domain; it reads RPGGITGVPS…PVYRLTTRLG (271 aa). 245 to 252 is a binding site for ATP; that stretch reads ARPSMGKT. Residues 534 to 683 form the DOD-type homing endonuclease domain; it reads LLGHLIGDGC…VQSLLLRLGI (150 aa). The SF4 helicase; second part domain occupies 646 to 915; the sequence is DGCIQMRRGK…ARFENLTMYQ (270 aa). Positions 914-941 are disordered; it reads YQPEPGTPLPETPDETILPSGPPDEAPF.

The protein belongs to the helicase family. DnaB subfamily. In terms of assembly, homohexamer. Upon expression in E.coli this protein undergoes self splicing that involves a post-translational excision of the intervening region (intein) followed by peptide ligation.

It carries out the reaction Couples ATP hydrolysis with the unwinding of duplex DNA at the replication fork by translocating in the 5'-3' direction. This creates two antiparallel DNA single strands (ssDNA). The leading ssDNA polymer is the template for DNA polymerase III holoenzyme which synthesizes a continuous strand.. The catalysed reaction is ATP + H2O = ADP + phosphate + H(+). Its function is as follows. The main replicative DNA helicase, it participates in initiation and elongation during chromosome replication. Travels ahead of the DNA replisome, separating dsDNA into templates for DNA synthesis. A processive ATP-dependent 5'-3' DNA helicase it has DNA-dependent ATPase activity. Functionally, the intein is an endonuclease. The chain is Replicative DNA helicase DnaB from Rhodothermus marinus (Rhodothermus obamensis).